Consider the following 467-residue polypeptide: Citrate synthase, mitochondrial (467 aa).

Catalysis depends on residues His-301 and His-347.

It belongs to the citrate synthase family.

Its subcellular location is the mitochondrion matrix. The enzyme catalyses oxaloacetate + acetyl-CoA + H2O = citrate + CoA + H(+). Its pathway is carbohydrate metabolism; tricarboxylic acid cycle; isocitrate from oxaloacetate: step 1/2. This Candida tropicalis (Yeast) protein is Citrate synthase, mitochondrial (CIT).